The primary structure comprises 337 residues: Endochitinase 37 (337 aa).

The first 25 residues, 1–25, serve as a signal peptide directing secretion; sequence MTRLLDASFLLLPVIASTLFGTASA. Positions 38–337 constitute a GH18 domain; it reads KVLQGYWENW…GSKNWTFGDN (300 aa). The active-site Proton donor is the Glu-160. An N-linked (GlcNAc...) asparagine glycan is attached at Asn-331.

Belongs to the glycosyl hydrolase 18 family. Chitinase class V subfamily. In terms of assembly, monomer.

It localises to the secreted. It catalyses the reaction Random endo-hydrolysis of N-acetyl-beta-D-glucosaminide (1-&gt;4)-beta-linkages in chitin and chitodextrins.. In terms of biological role, secreted chitinase involved in the degradation of chitin, a component of the cell walls of fungi and exoskeletal elements of some animals (including worms and arthropods). Plays a morphogenetic role during apical growth, cell division and differentiation (cell wall morphogenesis). May be involved in the degradation and further assimilation of phytopathogenic fungi, namely mycoparasitism, the major mechanism accounting for the antagonistic activity against phytopathogenic fungi displayed by Trichoderma. The polypeptide is Endochitinase 37 (chit37) (Trichoderma harzianum (Hypocrea lixii)).